A 464-amino-acid polypeptide reads, in one-letter code: ATP synthase subunit beta (464 aa).

148–155 (GGAGVGKT) is an ATP binding site.

The protein belongs to the ATPase alpha/beta chains family. As to quaternary structure, F-type ATPases have 2 components, CF(1) - the catalytic core - and CF(0) - the membrane proton channel. CF(1) has five subunits: alpha(3), beta(3), gamma(1), delta(1), epsilon(1). CF(0) has three main subunits: a(1), b(2) and c(9-12). The alpha and beta chains form an alternating ring which encloses part of the gamma chain. CF(1) is attached to CF(0) by a central stalk formed by the gamma and epsilon chains, while a peripheral stalk is formed by the delta and b chains.

The protein localises to the cell inner membrane. It carries out the reaction ATP + H2O + 4 H(+)(in) = ADP + phosphate + 5 H(+)(out). Its function is as follows. Produces ATP from ADP in the presence of a proton gradient across the membrane. The catalytic sites are hosted primarily by the beta subunits. This chain is ATP synthase subunit beta, found in Marinobacter nauticus (strain ATCC 700491 / DSM 11845 / VT8) (Marinobacter aquaeolei).